The chain runs to 198 residues: 7-methyl-GTP pyrophosphatase (198 aa).

Aspartate 75 acts as the Proton acceptor in catalysis.

This sequence belongs to the Maf family. YceF subfamily. It depends on a divalent metal cation as a cofactor.

It is found in the cytoplasm. The catalysed reaction is N(7)-methyl-GTP + H2O = N(7)-methyl-GMP + diphosphate + H(+). Functionally, nucleoside triphosphate pyrophosphatase that hydrolyzes 7-methyl-GTP (m(7)GTP). May have a dual role in cell division arrest and in preventing the incorporation of modified nucleotides into cellular nucleic acids. This is 7-methyl-GTP pyrophosphatase from Nitrosospira multiformis (strain ATCC 25196 / NCIMB 11849 / C 71).